The following is a 229-amino-acid chain: UPF0173 metal-dependent hydrolase SH1218 (229 aa).

Belongs to the UPF0173 family.

The chain is UPF0173 metal-dependent hydrolase SH1218 from Staphylococcus haemolyticus (strain JCSC1435).